Consider the following 152-residue polypeptide: D-aminoacyl-tRNA deacylase (152 aa).

Residues 142–143 (GP) carry the Gly-cisPro motif, important for rejection of L-amino acids motif.

This sequence belongs to the DTD family. In terms of assembly, homodimer.

The protein resides in the cytoplasm. The catalysed reaction is glycyl-tRNA(Ala) + H2O = tRNA(Ala) + glycine + H(+). The enzyme catalyses a D-aminoacyl-tRNA + H2O = a tRNA + a D-alpha-amino acid + H(+). An aminoacyl-tRNA editing enzyme that deacylates mischarged D-aminoacyl-tRNAs. Also deacylates mischarged glycyl-tRNA(Ala), protecting cells against glycine mischarging by AlaRS. Acts via tRNA-based rather than protein-based catalysis; rejects L-amino acids rather than detecting D-amino acids in the active site. By recycling D-aminoacyl-tRNA to D-amino acids and free tRNA molecules, this enzyme counteracts the toxicity associated with the formation of D-aminoacyl-tRNA entities in vivo and helps enforce protein L-homochirality. This Burkholderia cenocepacia (strain HI2424) protein is D-aminoacyl-tRNA deacylase.